Here is a 130-residue protein sequence, read N- to C-terminus: Histone H2A type 1-C (130 aa).

The tract at residues 1-22 (MSGRGKQGGKARAKAKSRSSRA) is disordered. An N-acetylserine modification is found at serine 2. Serine 2 carries the post-translational modification Phosphoserine; by RPS6KA5. At arginine 4 the chain carries Citrulline; alternate. A Symmetric dimethylarginine; by PRMT5; alternate modification is found at arginine 4. N6-(2-hydroxyisobutyryl)lysine; alternate is present on residues lysine 6 and lysine 10. Lysine 6 carries the N6-acetyllysine; alternate modification. The span at 7–19 (QGGKARAKAKSRS) shows a compositional bias: basic residues. Lysine 10 and lysine 14 each carry N6-(beta-hydroxybutyryl)lysine; alternate. Position 10 is an N6-lactoyllysine; alternate (lysine 10). Residue lysine 10 is modified to N6-succinyllysine; alternate. Lysine 14 participates in a covalent cross-link: Glycyl lysine isopeptide (Lys-Gly) (interchain with G-Cter in ubiquitin); alternate. Lysine 16 participates in a covalent cross-link: Glycyl lysine isopeptide (Lys-Gly) (interchain with G-Cter in ubiquitin). Lysine 37 is subject to N6-(2-hydroxyisobutyryl)lysine; alternate. Lysine 37 carries the N6-(beta-hydroxybutyryl)lysine; alternate modification. Lysine 37 carries the post-translational modification N6-crotonyllysine; alternate. N6-(2-hydroxyisobutyryl)lysine occurs at positions 75 and 76. Lysine 96 bears the N6-(2-hydroxyisobutyryl)lysine; alternate mark. Lysine 96 bears the N6-(beta-hydroxybutyryl)lysine; alternate mark. Lysine 96 is subject to N6-succinyllysine; alternate. Lysine 96 is modified (N6-glutaryllysine; alternate). The residue at position 105 (glutamine 105) is an N5-methylglutamine. Residue lysine 119 is modified to N6-(2-hydroxyisobutyryl)lysine; alternate. N6-(beta-hydroxybutyryl)lysine; alternate is present on lysine 119. Lysine 119 and lysine 120 each carry N6-crotonyllysine; alternate. 2 positions are modified to N6-glutaryllysine; alternate: lysine 119 and lysine 120. Lysine 120 participates in a covalent cross-link: Glycyl lysine isopeptide (Lys-Gly) (interchain with G-Cter in ubiquitin); alternate. A Phosphothreonine; by DCAF1 modification is found at threonine 121. Lysine 126 bears the N6-crotonyllysine; alternate mark. The residue at position 126 (lysine 126) is an N6-glutaryllysine; alternate.

It belongs to the histone H2A family. The nucleosome is a histone octamer containing two molecules each of H2A, H2B, H3 and H4 assembled in one H3-H4 heterotetramer and two H2A-H2B heterodimers. The octamer wraps approximately 147 bp of DNA. Deiminated on Arg-4 in granulocytes upon calcium entry. Post-translationally, monoubiquitination of Lys-120 (H2AK119Ub) by RING1, TRIM37 and RNF2/RING2 complex gives a specific tag for epigenetic transcriptional repression and participates in X chromosome inactivation of female mammals. It is involved in the initiation of both imprinted and random X inactivation. Ubiquitinated H2A is enriched in inactive X chromosome chromatin. Ubiquitination of H2A functions downstream of methylation of 'Lys-27' of histone H3 (H3K27me). H2AK119Ub by RNF2/RING2 can also be induced by ultraviolet and may be involved in DNA repair. Monoubiquitination of Lys-120 (H2AK119Ub) by TRIM37 may promote transformation of cells in a number of breast cancers. Following DNA double-strand breaks (DSBs), it is ubiquitinated through 'Lys-63' linkage of ubiquitin moieties by the E2 ligase UBE2N and the E3 ligases RNF8 and RNF168, leading to the recruitment of repair proteins to sites of DNA damage. Ubiquitination at Lys-14 and Lys-16 (H2AK13Ub and H2AK15Ub, respectively) in response to DNA damage is initiated by RNF168 that mediates monoubiquitination at these 2 sites, and 'Lys-63'-linked ubiquitin are then conjugated to monoubiquitin; RNF8 is able to extend 'Lys-63'-linked ubiquitin chains in vitro. Deubiquitinated by USP51 at Lys-14 and Lys-16 (H2AK13Ub and H2AK15Ub, respectively) after damaged DNA is repaired. H2AK119Ub and ionizing radiation-induced 'Lys-63'-linked ubiquitination (H2AK13Ub and H2AK15Ub) are distinct events. In terms of processing, phosphorylation on Ser-2 (H2AS1ph) is enhanced during mitosis. Phosphorylation on Ser-2 by RPS6KA5/MSK1 directly represses transcription. Acetylation of H3 inhibits Ser-2 phosphorylation by RPS6KA5/MSK1. Phosphorylation at Thr-121 (H2AT120ph) by DCAF1 is present in the regulatory region of many tumor suppresor genes and down-regulates their transcription. Glutamine methylation at Gln-105 (H2AQ104me) by FBL is specifically dedicated to polymerase I. It is present at 35S ribosomal DNA locus and impairs binding of the FACT complex. Post-translationally, symmetric dimethylation on Arg-4 by the PRDM1/PRMT5 complex may play a crucial role in the germ-cell lineage. In terms of processing, crotonylation (Kcr) is specifically present in male germ cells and marks testis-specific genes in post-meiotic cells, including X-linked genes that escape sex chromosome inactivation in haploid cells. Crotonylation marks active promoters and enhancers and confers resistance to transcriptional repressors. It is also associated with post-meiotically activated genes on autosomes. Lactylated in macrophages by EP300/P300 by using lactoyl-CoA directly derived from endogenous or exogenous lactate, leading to stimulates gene transcription.

The protein resides in the nucleus. The protein localises to the chromosome. Core component of nucleosome. Nucleosomes wrap and compact DNA into chromatin, limiting DNA accessibility to the cellular machineries which require DNA as a template. Histones thereby play a central role in transcription regulation, DNA repair, DNA replication and chromosomal stability. DNA accessibility is regulated via a complex set of post-translational modifications of histones, also called histone code, and nucleosome remodeling. This chain is Histone H2A type 1-C, found in Homo sapiens (Human).